The primary structure comprises 292 residues: Diaminopimelate epimerase (292 aa).

3 residues coordinate substrate: N13, Q46, and N66. C75 (proton donor) is an active-site residue. Substrate is bound by residues 76–77 (GN), N170, N203, and 221–222 (ER). C230 serves as the catalytic Proton acceptor. 231 to 232 (GT) contributes to the substrate binding site.

It belongs to the diaminopimelate epimerase family. In terms of assembly, homodimer.

Its subcellular location is the cytoplasm. It catalyses the reaction (2S,6S)-2,6-diaminopimelate = meso-2,6-diaminopimelate. It participates in amino-acid biosynthesis; L-lysine biosynthesis via DAP pathway; DL-2,6-diaminopimelate from LL-2,6-diaminopimelate: step 1/1. Its function is as follows. Catalyzes the stereoinversion of LL-2,6-diaminopimelate (L,L-DAP) to meso-diaminopimelate (meso-DAP), a precursor of L-lysine and an essential component of the bacterial peptidoglycan. The sequence is that of Diaminopimelate epimerase from Acidovorax ebreus (strain TPSY) (Diaphorobacter sp. (strain TPSY)).